An 880-amino-acid chain; its full sequence is Probable receptor-like protein kinase At5g38990 (880 aa).

The N-terminal stretch at 1 to 21 (MICHVLVIFTILVSAVVDATA) is a signal peptide. The Extracellular portion of the chain corresponds to 22–440 (SYEPTDVFLI…GKGKSSHVLP (419 aa)). Residues Asn-46, Asn-136, Asn-158, Asn-210, Asn-256, Asn-263, Asn-297, and Asn-324 are each glycosylated (N-linked (GlcNAc...) asparagine). The chain crosses the membrane as a helical span at residues 441–461 (IIIAVVGSAVALAFFVLVVVL). Residues 462–880 (VVMKRKKKSN…FSEINEPKAR (419 aa)) are Cytoplasmic-facing. Positions 471 to 505 (NESSVDTTNKPSTNSSWGPLLHGTGSTNTKSASSL) are disordered. Composition is skewed to polar residues over residues 472–487 (ESSVDTTNKPSTNSSW) and 494–505 (TGSTNTKSASSL). The Protein kinase domain occupies 525–810 (FEEKLIIGVG…EFALQLHETA (286 aa)). Residues 531–539 (IGVGGFGSV) and Lys-554 contribute to the ATP site. Asp-653 acts as the Proton acceptor in catalysis. The interval 820 to 846 (LDLMPSGEVGTTTDGEDDLFSRTTGHV) is disordered.

It belongs to the protein kinase superfamily. Ser/Thr protein kinase family.

It localises to the membrane. This is Probable receptor-like protein kinase At5g38990 from Arabidopsis thaliana (Mouse-ear cress).